Consider the following 281-residue polypeptide: Imidazole glycerol phosphate synthase subunit HisF (281 aa).

Residues aspartate 12 and aspartate 131 contribute to the active site. The segment at 256 to 281 (VRQAEPLPQPAREGLGDSARRAMSSG) is disordered.

The protein belongs to the HisA/HisF family. As to quaternary structure, heterodimer of HisH and HisF.

The protein resides in the cytoplasm. It carries out the reaction 5-[(5-phospho-1-deoxy-D-ribulos-1-ylimino)methylamino]-1-(5-phospho-beta-D-ribosyl)imidazole-4-carboxamide + L-glutamine = D-erythro-1-(imidazol-4-yl)glycerol 3-phosphate + 5-amino-1-(5-phospho-beta-D-ribosyl)imidazole-4-carboxamide + L-glutamate + H(+). The protein operates within amino-acid biosynthesis; L-histidine biosynthesis; L-histidine from 5-phospho-alpha-D-ribose 1-diphosphate: step 5/9. Functionally, IGPS catalyzes the conversion of PRFAR and glutamine to IGP, AICAR and glutamate. The HisF subunit catalyzes the cyclization activity that produces IGP and AICAR from PRFAR using the ammonia provided by the HisH subunit. This Thermosynechococcus vestitus (strain NIES-2133 / IAM M-273 / BP-1) protein is Imidazole glycerol phosphate synthase subunit HisF.